The chain runs to 448 residues: Proton extrusion protein PxcA (448 aa).

A run of 4 helical transmembrane segments spans residues 231–251, 323–343, 372–392, and 408–428; these read ILLL…FFLI, IDSI…VLVL, LIIL…WEVI, and FNFL…KYWI.

It belongs to the CemA family.

The protein resides in the cell inner membrane. Required for H(+) efflux immediately after light irradiation to form a rapid H(+) concentration gradient across the thylakoid membranes. Together with PxcL, contributes to transient H(+) uptake following dark to light transition. In Rippkaea orientalis (strain PCC 8801 / RF-1) (Cyanothece sp. (strain PCC 8801)), this protein is Proton extrusion protein PxcA.